The sequence spans 223 residues: Cytidylate kinase (223 aa).

10–18 (GPAGSGKSS) lines the ATP pocket.

The protein belongs to the cytidylate kinase family. Type 1 subfamily.

It is found in the cytoplasm. It catalyses the reaction CMP + ATP = CDP + ADP. The catalysed reaction is dCMP + ATP = dCDP + ADP. The sequence is that of Cytidylate kinase from Pseudothermotoga lettingae (strain ATCC BAA-301 / DSM 14385 / NBRC 107922 / TMO) (Thermotoga lettingae).